The sequence spans 418 residues: CinA-like protein (418 aa).

It belongs to the CinA family.

The polypeptide is CinA-like protein (Cytophaga hutchinsonii (strain ATCC 33406 / DSM 1761 / CIP 103989 / NBRC 15051 / NCIMB 9469 / D465)).